Here is a 628-residue protein sequence, read N- to C-terminus: Translation factor GUF1, mitochondrial (628 aa).

The tr-type G domain occupies 27-209 (LPSRNFSIIA…AIISRIPPPS (183 aa)). GTP is bound by residues 36 to 43 (AHIDHGKS), 102 to 106 (DTPGH), and 156 to 159 (NKID).

Belongs to the TRAFAC class translation factor GTPase superfamily. Classic translation factor GTPase family. LepA subfamily.

It localises to the mitochondrion inner membrane. The catalysed reaction is GTP + H2O = GDP + phosphate + H(+). Its function is as follows. Promotes mitochondrial protein synthesis. May act as a fidelity factor of the translation reaction, by catalyzing a one-codon backward translocation of tRNAs on improperly translocated ribosomes. Binds to mitochondrial ribosomes in a GTP-dependent manner. The protein is Translation factor GUF1, mitochondrial of Laccaria bicolor (strain S238N-H82 / ATCC MYA-4686) (Bicoloured deceiver).